A 977-amino-acid chain; its full sequence is Poly(ADP-ribose) glycohydrolase (977 aa).

The interval 1–69 (MSAGPGCEPC…LGRAGQHRGS (69 aa)) is disordered. Residues 1–457 (MSAGPGCEPC…LSPDKKWLGT (457 aa)) are A-domain. The Nuclear localization signal motif lies at 10 to 16 (CTKRPRW). A compositionally biased stretch (low complexity) spans 17–29 (DAAATSPPAASDA). Ser69 carries the post-translational modification Phosphoserine. The short motif at 77–84 (QKTITSWM) is the PIP-box (PCNA interacting peptide) element. Phosphoserine occurs at positions 138 and 198. The interval 184–407 (SNANVDQSSP…CRNSKQHGRK (224 aa)) is disordered. 2 stretches are compositionally biased toward basic and acidic residues: residues 192 to 207 (SPKDDHSDTNSEESRD) and 223 to 234 (TMEDEQGREARS). Thr200 is modified (phosphothreonine). Phosphoserine occurs at positions 262, 265, 287, 292, 299, 303, and 317. Residues 280–291 (NRLNRQESSLGN) show a composition bias toward polar residues. Acidic residues predominate over residues 317–332 (SEADEETSPGFDEQED). Residues 333–343 (SSSAQTANKPS) are compositionally biased toward polar residues. N6-acetyllysine is present on Lys341. A compositionally biased stretch (basic and acidic residues) spans 346-356 (QPREADTELRK). The residue at position 449 (Ser449) is a Phosphoserine. A catalytic region spans residues 611–796 (QPIPLLKQKM…TEQYSEYTGY (186 aa)). Residue 727–728 (IE) coordinates substrate. Residue Asp738 is part of the active site. Residues Asn741 and Gln755 each coordinate substrate. Catalysis depends on residues Glu756 and Glu757. Substrate contacts are provided by residues Tyr796 and 870–875 (NWGCGA).

It belongs to the poly(ADP-ribose) glycohydrolase family. As to quaternary structure, interacts with PCNA. Interacts with NUDT5.

The protein localises to the nucleus. It catalyses the reaction [(1''-&gt;2')-ADP-alpha-D-ribose](n) + H2O = [(1''-&gt;2')-ADP-alpha-D-ribose](n-1) + ADP-D-ribose. In terms of biological role, poly(ADP-ribose) glycohydrolase that degrades poly(ADP-ribose) by hydrolyzing the ribose-ribose bonds present in poly(ADP-ribose). PARG acts both as an endo- and exoglycosidase, releasing poly(ADP-ribose) of different length as well as ADP-ribose monomers. It is however unable to cleave the ester bond between the terminal ADP-ribose and ADP-ribosylated residues, leaving proteins that are mono-ADP-ribosylated. Poly(ADP-ribose) is synthesized after DNA damage is only present transiently and is rapidly degraded by PARG. Required to prevent detrimental accumulation of poly(ADP-ribose) upon prolonged replicative stress, while it is not required for recovery from transient replicative stress. Responsible for the prevalence of mono-ADP-ribosylated proteins in cells, thanks to its ability to degrade poly(ADP-ribose) without cleaving the terminal protein-ribose bond. Required for retinoid acid-dependent gene transactivation, probably by removing poly(ADP-ribose) from histone demethylase KDM4D, allowing chromatin derepression at RAR-dependent gene promoters. Involved in the synthesis of ATP in the nucleus, together with PARP1, NMNAT1 and NUDT5. Nuclear ATP generation is required for extensive chromatin remodeling events that are energy-consuming. In Bos taurus (Bovine), this protein is Poly(ADP-ribose) glycohydrolase.